Consider the following 101-residue polypeptide: Small ribosomal subunit protein uS10 (101 aa).

This sequence belongs to the universal ribosomal protein uS10 family. Part of the 30S ribosomal subunit.

Involved in the binding of tRNA to the ribosomes. The protein is Small ribosomal subunit protein uS10 of Mycobacteroides abscessus (strain ATCC 19977 / DSM 44196 / CCUG 20993 / CIP 104536 / JCM 13569 / NCTC 13031 / TMC 1543 / L948) (Mycobacterium abscessus).